The sequence spans 568 residues: MVSGTDTTEVGATTKAPPSEGTEGILDDHSSNSQPQAEKPAKTHYPLSFWLAFLGLCCTGLVSALDGSIVATALPSIIESLDGGDDYPLYGQLADLWGRRYVMIGATIIFILGSGLCGGSSSMNMLIWSRAVQGIGAGGINMLIDMIICDLVPMRERGNFIGLLFLFVSLGATIGPFVGGILTDRASWRWLWLLILLQIFYINLPFGGVALLLLILFLHVKWKNDLSTMERLRRVDVIGNSILIGATFAILYALTYGGTRYTWSDPHIAAPLTIGLVGLVAAFFWEMSPWCKYPVMPPLHFQNRTSAAAFFISFMCMLLAFWINFFYPVYFQAVLIASPTRAGVYTLPRAIAFPLFAAVGGAIVSKTGRYRTVHLVSTGIMPLVMGLSSILDQGSSKAEWVIWQLLFGVSGGMMISTTLQAVQAALPESEVATSVGTWSFVRSLGTIWGLSIPAAIFNNRFDQLSTQFDPSIRALFTRGQAYEHGTAKFIQSFDPETRQIVIQAYIEALKRVWQIGIVFGGVTFLSVFFEKEIHLRTELKTDFGLDEKKKGEVAKEENDVENNGTTVQ.

The span at 1-11 (MVSGTDTTEVG) shows a compositional bias: polar residues. Residues 1–39 (MVSGTDTTEVGATTKAPPSEGTEGILDDHSSNSQPQAEK) form a disordered region. Helical transmembrane passes span 45–65 (YPLS…VSAL), 101–121 (YVMI…GGSS), 134–154 (GIGA…LVPM), 161–181 (IGLL…VGGI), 199–219 (IFYI…LFLH), 237–257 (VIGN…LTYG), and 268–288 (IAAP…WEMS). Asn303 is a glycosylation site (N-linked (GlcNAc...) asparagine). 6 helical membrane passes run 307 to 327 (AAAF…NFFY), 344 to 364 (VYTL…GAIV), 372 to 392 (TVHL…SILD), 399 to 419 (EWVI…STTL), 437 to 457 (TWSF…AAIF), and 515 to 535 (IGIV…EIHL). N-linked (GlcNAc...) asparagine glycosylation is present at Asn563.

Belongs to the major facilitator superfamily.

Its subcellular location is the cell membrane. MFS-type efflux transporter; part of the gene cluster that mediates the biosynthesis of thethe mycotoxins phomacins, leucine-derived cytochalasans with potent actin polymerization-inhibitory activities and monocot-specific antigerminative activities. PhmH might be involved in the excretion of phomacins. The polypeptide is MFS-type efflux transporter phmH (Phaeosphaeria nodorum (strain SN15 / ATCC MYA-4574 / FGSC 10173) (Glume blotch fungus)).